The following is a 276-amino-acid chain: Large ribosomal subunit protein uL2 (276 aa).

Residues 211-276 (RNRHRGIRPQ…KLIISRRKGK (66 aa)) form a disordered region. The segment covering 230 to 240 (DHPHGGGEGKK) has biased composition (basic and acidic residues).

This sequence belongs to the universal ribosomal protein uL2 family. As to quaternary structure, part of the 50S ribosomal subunit. Forms a bridge to the 30S subunit in the 70S ribosome.

Its function is as follows. One of the primary rRNA binding proteins. Required for association of the 30S and 50S subunits to form the 70S ribosome, for tRNA binding and peptide bond formation. It has been suggested to have peptidyltransferase activity; this is somewhat controversial. Makes several contacts with the 16S rRNA in the 70S ribosome. The chain is Large ribosomal subunit protein uL2 from Campylobacter jejuni subsp. doylei (strain ATCC BAA-1458 / RM4099 / 269.97).